The following is a 193-amino-acid chain: Penicillin-binding protein activator LpoB (193 aa).

The first 16 residues, 1–16 (MKKMLFVVAAVFLLAG), serve as a signal peptide directing secretion. A lipid anchor (N-palmitoyl cysteine) is attached at Cys17. Residue Cys17 is the site of S-diacylglycerol cysteine attachment. The disordered stretch occupies residues 23 to 50 (QQPPAPVEPVTPTEPTEPPKPIEPPIEV). Pro residues predominate over residues 37–46 (PTEPPKPIEP).

Belongs to the LpoB family. As to quaternary structure, interacts with PBP1b.

Its subcellular location is the cell outer membrane. Functionally, regulator of peptidoglycan synthesis that is essential for the function of penicillin-binding protein 1B (PBP1b). In Proteus mirabilis (strain HI4320), this protein is Penicillin-binding protein activator LpoB.